A 395-amino-acid chain; its full sequence is Allantoicase (395 aa).

It belongs to the allantoicase family.

It carries out the reaction allantoate + H2O = (S)-ureidoglycolate + urea. It participates in nitrogen metabolism; (S)-allantoin degradation; (S)-ureidoglycolate from allantoate (aminidohydrolase route): step 1/1. Its function is as follows. Utilization of purines as secondary nitrogen sources, when primary sources are limiting. The protein is Allantoicase (allc) of Danio rerio (Zebrafish).